The sequence spans 280 residues: Hematopoietically-expressed homeobox protein HHEX homolog (280 aa).

Disordered regions lie at residues 1–35 (MSTL…GLAP) and 221–280 (RRVK…EKEA). Positions 165–224 (RKGGQVRFSNDQTMELEKKFESQKYLSPPERKKLAKLLQLSERQVKTWFQNRRAKWRRVK) form a DNA-binding region, homeobox. Basic and acidic residues predominate over residues 232 to 252 (GEGDENSHEKPRDLDRDDFSR).

Its subcellular location is the nucleus. In terms of biological role, transcription factor that may play a central role in activating or maintaining gene expression in the vegetal pole. Part of a gene regulatory circuit with Erg and Tgif that operates early in mesoderm development. This chain is Hematopoietically-expressed homeobox protein HHEX homolog, found in Patiria miniata (Bat star).